The sequence spans 340 residues: Cathepsin S (340 aa).

Residues 1–17 (MRAPGHAAIRWLFWMPL) form the signal peptide. A propeptide spans 18 to 122 (VCSVAMEQLQ…VTFRSYSNRT (105 aa)) (activation peptide). N120 carries N-linked (GlcNAc...) asparagine glycosylation. 4 cysteine pairs are disulfide-bonded: C134–C233, C144–C189, C178–C222, and C281–C329. C147 is an active-site residue. Active-site residues include H287 and N307.

The protein belongs to the peptidase C1 family. In terms of tissue distribution, widely expressed with highest expression found in non-skeletal tissues. Relatively high levels found in skeletal tissues. Expressed in spleen, B cells, dendritic cells and macrophages.

The protein resides in the lysosome. The protein localises to the secreted. It localises to the cytoplasmic vesicle. Its subcellular location is the phagosome. It carries out the reaction Similar to cathepsin L, but with much less activity on Z-Phe-Arg-|-NHMec, and more activity on the Z-Val-Val-Arg-|-Xaa compound.. Functionally, thiol protease. Key protease responsible for the removal of the invariant chain from MHC class II molecules and MHC class II antigen presentation. The bond-specificity of this proteinase is in part similar to the specificities of cathepsin L. The protein is Cathepsin S (Ctss) of Mus musculus (Mouse).